The following is a 417-amino-acid chain: Cobalamin binding intrinsic factor (417 aa).

The signal sequence occupies residues 1–18 (MAWLSFYLLNVLWAVAGT). Disulfide bonds link cysteine 26-cysteine 246, cysteine 103-cysteine 288, and cysteine 143-cysteine 182. Aspartate 171 is a binding site for cob(II)alamin. A Phosphoserine modification is found at serine 191. Asparagine 209 carries N-linked (GlcNAc...) asparagine glycosylation. Cob(II)alamin is bound by residues aspartate 222 and glutamine 270. 2 N-linked (GlcNAc...) asparagine glycosylation sites follow: asparagine 311 and asparagine 330. Cob(II)alamin is bound by residues 365-370 (SWGLIV) and 386-395 (WEFLSGKTPL). Asparagine 413 carries N-linked (GlcNAc...) asparagine glycosylation.

This sequence belongs to the eukaryotic cobalamin transport proteins family. Interacts with CUBN (via CUB domains). Post-translationally, the N-terminus is blocked. Gastric mucosa.

The protein resides in the secreted. Its function is as follows. Promotes absorption of the essential vitamin cobalamin (Cbl) in the ileum. After interaction with CUBN, the CBLIF-cobalamin complex is internalized via receptor-mediated endocytosis. The sequence is that of Cobalamin binding intrinsic factor from Rattus norvegicus (Rat).